The chain runs to 237 residues: Leucyl/phenylalanyl-tRNA--protein transferase (237 aa).

It belongs to the L/F-transferase family.

It localises to the cytoplasm. It carries out the reaction N-terminal L-lysyl-[protein] + L-leucyl-tRNA(Leu) = N-terminal L-leucyl-L-lysyl-[protein] + tRNA(Leu) + H(+). The enzyme catalyses N-terminal L-arginyl-[protein] + L-leucyl-tRNA(Leu) = N-terminal L-leucyl-L-arginyl-[protein] + tRNA(Leu) + H(+). It catalyses the reaction L-phenylalanyl-tRNA(Phe) + an N-terminal L-alpha-aminoacyl-[protein] = an N-terminal L-phenylalanyl-L-alpha-aminoacyl-[protein] + tRNA(Phe). Functionally, functions in the N-end rule pathway of protein degradation where it conjugates Leu, Phe and, less efficiently, Met from aminoacyl-tRNAs to the N-termini of proteins containing an N-terminal arginine or lysine. The sequence is that of Leucyl/phenylalanyl-tRNA--protein transferase from Photobacterium profundum (strain SS9).